A 324-amino-acid chain; its full sequence is Cyclin-dependent kinase 1 (324 aa).

The region spanning 4–307 (YQKIEKIGEG…AKQACMHPYF (304 aa)) is the Protein kinase domain. Residues 10-18 (IGEGTYGVV) and lysine 34 each bind ATP. Position 14 is a phosphothreonine (threonine 14). Tyrosine 15 is subject to Phosphotyrosine. The active-site Proton acceptor is the aspartate 148. Phosphothreonine; by CAK is present on threonine 181.

The protein belongs to the protein kinase superfamily. CMGC Ser/Thr protein kinase family. CDC2/CDKX subfamily. In terms of assembly, forms a stable but non-covalent complex with a regulatory subunit (SUC1) and with a cyclin.

It catalyses the reaction L-seryl-[protein] + ATP = O-phospho-L-seryl-[protein] + ADP + H(+). It carries out the reaction L-threonyl-[protein] + ATP = O-phospho-L-threonyl-[protein] + ADP + H(+). Its activity is regulated as follows. Phosphorylation at Thr-14 or Tyr-15 inactivates the enzyme, while phosphorylation at Thr-181 activates it. In terms of biological role, cyclin-dependent kinase that acts as a master regulator of the mitotic and meiotic cell cycles. The polypeptide is Cyclin-dependent kinase 1 (Ajellomyces capsulatus (Darling's disease fungus)).